We begin with the raw amino-acid sequence, 294 residues long: Signal peptidase I (294 aa).

Residues 1–59 (MTETTDSPSERQPGPAEPELSSRDPDIAGQVFDAAPFDAAPDADSEGDSKAAKTDEPRP) are disordered. The Cytoplasmic segment spans residues 1–66 (MTETTDSPSE…PRPAKRSTLR (66 aa)). Residues 47 to 59 (GDSKAAKTDEPRP) show a composition bias toward basic and acidic residues. The helical transmembrane segment at 67 to 87 (EFAVLAVIAVVLYYVMLTFVA) threads the bilayer. Over 88-294 (RPYLIPSESM…VRSVNPQQGR (207 aa)) the chain is Extracellular. Catalysis depends on residues serine 96 and lysine 174.

Belongs to the peptidase S26 family.

Its subcellular location is the cell membrane. It carries out the reaction Cleavage of hydrophobic, N-terminal signal or leader sequences from secreted and periplasmic proteins.. This Mycobacterium tuberculosis (strain CDC 1551 / Oshkosh) protein is Signal peptidase I (lepB).